A 436-amino-acid polypeptide reads, in one-letter code: UDP-N-acetylglucosamine 1-carboxyvinyltransferase 1 (436 aa).

22 to 23 (KN) lines the phosphoenolpyruvate pocket. Arginine 93 lines the UDP-N-acetyl-alpha-D-glucosamine pocket. Residue cysteine 117 is the Proton donor of the active site. Residue cysteine 117 is modified to 2-(S-cysteinyl)pyruvic acid O-phosphothioketal. UDP-N-acetyl-alpha-D-glucosamine contacts are provided by residues 122 to 126 (RPIDQ), aspartate 306, and valine 328.

Belongs to the EPSP synthase family. MurA subfamily.

The protein localises to the cytoplasm. It carries out the reaction phosphoenolpyruvate + UDP-N-acetyl-alpha-D-glucosamine = UDP-N-acetyl-3-O-(1-carboxyvinyl)-alpha-D-glucosamine + phosphate. It functions in the pathway cell wall biogenesis; peptidoglycan biosynthesis. In terms of biological role, cell wall formation. Adds enolpyruvyl to UDP-N-acetylglucosamine. Essential for cell growth. This is UDP-N-acetylglucosamine 1-carboxyvinyltransferase 1 from Bacillus subtilis (strain 168).